A 177-amino-acid polypeptide reads, in one-letter code: MARVSGAAAAEAALMRALYDEHAAVLWRYALRLTGDAAQAEDVVQETLLRAWQHPEVIGDTARPARAWLFTVARNMIIDERRSARFRNVVGSTDQSGTPEQSTPDEVNAALDRLLIADALAQLSAEHRAVIQRSYYRGWSTAQIATDLGIAEGTVKSRLHYAVRALRLTLQELGVTR.

The tract at residues Leu18 to Arg85 is sigma-70 factor domain-2. Positions Asp42 to Gln45 match the Interaction with polymerase core subunit RpoC motif. A sigma-70 factor domain-4 region spans residues Ala119–Arg167. Positions Thr141 to His160 form a DNA-binding region, H-T-H motif.

Belongs to the sigma-70 factor family. ECF subfamily. In terms of assembly, interacts transiently with the RNA polymerase catalytic core formed by RpoA, RpoB, RpoC and RpoZ (2 alpha, 1 beta, 1 beta' and 1 omega subunit) to form the RNA polymerase holoenzyme that can initiate transcription. Interacts (via sigma-70 factor domain 4) with anti-sigma-L factor RslA.

Functionally, sigma factors are initiation factors that promote the attachment of RNA polymerase to specific initiation sites and are then released. Extracytoplasmic function (ECF) sigma factors are held in an inactive form by an anti-sigma factor until released by regulated intramembrane proteolysis. This is ECF RNA polymerase sigma factor SigL (sigL) from Mycobacterium tuberculosis (strain ATCC 35801 / TMC 107 / Erdman).